The following is a 286-amino-acid chain: 4-hydroxybenzoate octaprenyltransferase (286 aa).

A run of 7 helical transmembrane segments spans residues 21–40, 95–115, 142–162, 167–187, 210–230, 235–255, and 266–286; these read GTLLLLWPCLMALMLAAGGM, ILFVILGLSAFGLVLLLNGLV, FLGIVWSWSIPMAYAAQTGEV, WWLFAANWCWTVAYDTMYAMV, QIIGLFQLAALACFIAAGWSA, LYGLGILTFVGFSTYQQMLIF, and FLNNNWAGLALFVGLGADYLI.

This sequence belongs to the UbiA prenyltransferase family. Mg(2+) serves as cofactor.

The protein resides in the cell inner membrane. It carries out the reaction all-trans-octaprenyl diphosphate + 4-hydroxybenzoate = 4-hydroxy-3-(all-trans-octaprenyl)benzoate + diphosphate. It functions in the pathway cofactor biosynthesis; ubiquinone biosynthesis. Catalyzes the prenylation of para-hydroxybenzoate (PHB) with an all-trans polyprenyl group. Mediates the second step in the final reaction sequence of ubiquinone-8 (UQ-8) biosynthesis, which is the condensation of the polyisoprenoid side chain with PHB, generating the first membrane-bound Q intermediate 3-octaprenyl-4-hydroxybenzoate. The sequence is that of 4-hydroxybenzoate octaprenyltransferase from Shewanella baltica (strain OS155 / ATCC BAA-1091).